The sequence spans 98 residues: Large ribosomal subunit protein bL27 (98 aa).

Residues 1–11 are compositionally biased toward polar residues; that stretch reads MASKASGGSTR. Residues 1–20 form a disordered region; the sequence is MASKASGGSTRNGRDSISKR.

The protein belongs to the bacterial ribosomal protein bL27 family.

This chain is Large ribosomal subunit protein bL27, found in Aquifex aeolicus (strain VF5).